Reading from the N-terminus, the 89-residue chain is Small ribosomal subunit protein bS18 (89 aa).

This sequence belongs to the bacterial ribosomal protein bS18 family. As to quaternary structure, part of the 30S ribosomal subunit. Forms a tight heterodimer with protein bS6.

In terms of biological role, binds as a heterodimer with protein bS6 to the central domain of the 16S rRNA, where it helps stabilize the platform of the 30S subunit. The polypeptide is Small ribosomal subunit protein bS18 (Phocaeicola vulgatus (strain ATCC 8482 / DSM 1447 / JCM 5826 / CCUG 4940 / NBRC 14291 / NCTC 11154) (Bacteroides vulgatus)).